We begin with the raw amino-acid sequence, 1015 residues long: Translation initiation factor IF-2 (1015 aa).

4 disordered regions span residues 124–144 (EKEP…EKKV), 159–179 (EVTV…PKPV), 196–230 (KKEE…KEEE), and 250–386 (IDLA…VSEE). 2 stretches are compositionally biased toward basic and acidic residues: residues 196–217 (KKEE…EKPV) and 265–315 (SKEE…DPNG). The 171-residue stretch at 514-684 (HRAPIVTVMG…LLEAEMLDLK (171 aa)) folds into the tr-type G domain. The interval 523–530 (GHVDHGKT) is G1. 523 to 530 (GHVDHGKT) lines the GTP pocket. A G2 region spans residues 548–552 (GITQH). Residues 570–573 (DTPG) are G3. GTP is bound by residues 570–574 (DTPGH) and 624–627 (NKID). The tract at residues 624 to 627 (NKID) is G4. The segment at 660–662 (SAK) is G5.

The protein belongs to the TRAFAC class translation factor GTPase superfamily. Classic translation factor GTPase family. IF-2 subfamily.

It localises to the cytoplasm. Its function is as follows. One of the essential components for the initiation of protein synthesis. Protects formylmethionyl-tRNA from spontaneous hydrolysis and promotes its binding to the 30S ribosomal subunits. Also involved in the hydrolysis of GTP during the formation of the 70S ribosomal complex. This is Translation initiation factor IF-2 from Bacteroides fragilis (strain ATCC 25285 / DSM 2151 / CCUG 4856 / JCM 11019 / LMG 10263 / NCTC 9343 / Onslow / VPI 2553 / EN-2).